A 1793-amino-acid polypeptide reads, in one-letter code: Non-reducing polyketide synthase adaA (1793 aa).

The N-terminal acylcarrier protein transacylase domain (SAT) stretch occupies residues 16 to 250 (NDDLKALFRG…YSKSLALPVY (235 aa)). Residues 388–821 (DSKLAIVGMA…GGNTTLVLED (434 aa)) enclose the Ketosynthase family 3 (KS3) domain. Residues Cys-561, His-696, and His-739 each act as for beta-ketoacyl synthase activity in the active site. Residues 923 to 1245 (VFTFTGQGAY…KSLCTLHLAG (323 aa)) form a malonyl-CoA:ACP transacylase (MAT) domain region. The segment at 1312–1634 (TSLIHQVTEE…RLLMDRFFSP (323 aa)) is product template (PT) domain. The segment at 1316–1452 (HQVTEETVDK…GSIKYPADPT (137 aa)) is N-terminal hotdog fold. Residues 1316 to 1629 (HQVTEETVDK…FRRVPRLLMD (314 aa)) form the PKS/mFAS DH domain. His-1348 serves as the catalytic Proton acceptor; for dehydratase activity. Positions 1482-1629 (KASTLSKPLA…FRRVPRLLMD (148 aa)) are C-terminal hotdog fold. Residue Asp-1540 is the Proton donor; for dehydratase activity of the active site. Over residues 1642-1659 (AAPAPAPAAVPAVKKQPP) the composition is skewed to low complexity. The tract at residues 1642 to 1714 (AAPAPAPAAV…TTEQEAPVAD (73 aa)) is disordered. A compositionally biased stretch (polar residues) spans 1660 to 1681 (TETIQPQAPKTEQKQDQLQLPN). Over residues 1683 to 1706 (ASAAPSTANSSSSPSSSGVATPTT) the composition is skewed to low complexity. A Carrier domain is found at 1716-1793 (SAVTGVAGKC…DLTGWLEQYC (78 aa)). Residue Ser-1753 is modified to O-(pantetheine 4'-phosphoryl)serine.

Requires pantetheine 4'-phosphate as cofactor.

It catalyses the reaction holo-[ACP] + 9 malonyl-CoA + acetyl-CoA + 9 H(+) = 3-(2,4-dioxopentyl)-3,6,8,9-tetrahydroxy-1-oxo-1,2,3,4-tetrahydroanthracene-2-carboxyl-[ACP] + 9 CO2 + 10 CoA + 2 H2O. The protein operates within secondary metabolite biosynthesis. Non-reducing polyketide synthase; part of the gene cluster that mediates the biosynthesis of the linear tetracyclic TAN-1612 neuropeptide Y receptor antagonist. The decaketide backbone of TAN-1612 is synthesized by the non-reducing polyketide synthase adaA via condensation of one acetyl-CoA starter unit with 9 malonyl-CoA units. The FAD-dependent monooxygenase adaC then performs hydroxylation at C2 while the polaketide chain is still attached to the NRPKS adaA. The alpha-hydroxylation step at C2 appears to be crucial for the following C18-C1 Claisen cyclization and release of the C9-hydroxyl version of TAN-1612 from the NRPKS adaA, two steps performed by the lactamase-like protein adaB. Finally, the O-methyltransferase adaD performs the C9 O-methylation to complete the biosynthesis of TAN-1612. The sequence is that of Non-reducing polyketide synthase adaA from Aspergillus niger (strain ATCC MYA-4892 / CBS 513.88 / FGSC A1513).